The following is a 290-amino-acid chain: ATP synthase gamma chain (290 aa).

Belongs to the ATPase gamma chain family. As to quaternary structure, F-type ATPases have 2 components, CF(1) - the catalytic core - and CF(0) - the membrane proton channel. CF(1) has five subunits: alpha(3), beta(3), gamma(1), delta(1), epsilon(1). CF(0) has three main subunits: a, b and c.

It localises to the cell inner membrane. In terms of biological role, produces ATP from ADP in the presence of a proton gradient across the membrane. The gamma chain is believed to be important in regulating ATPase activity and the flow of protons through the CF(0) complex. This chain is ATP synthase gamma chain, found in Dictyoglomus thermophilum (strain ATCC 35947 / DSM 3960 / H-6-12).